A 117-amino-acid chain; its full sequence is Flagellar transcriptional regulator FlhD (117 aa).

This sequence belongs to the FlhD family. Homodimer; disulfide-linked. Forms a heterohexamer composed of two FlhC and four FlhD subunits. Each FlhC binds a FlhD dimer, forming a heterotrimer, and a hexamer assembles by dimerization of two heterotrimers.

It is found in the cytoplasm. Its function is as follows. Functions in complex with FlhC as a master transcriptional regulator that regulates transcription of several flagellar and non-flagellar operons by binding to their promoter region. Activates expression of class 2 flagellar genes, including fliA, which is a flagellum-specific sigma factor that turns on the class 3 genes. Also regulates genes whose products function in a variety of physiological pathways. This chain is Flagellar transcriptional regulator FlhD, found in Erwinia amylovora (strain CFBP1430).